Reading from the N-terminus, the 383-residue chain is Arginine biosynthesis bifunctional protein ArgJ (383 aa).

Residues Thr146, Lys168, Thr179, Glu259, Asn378, and Ser383 each contribute to the substrate site. Thr179 serves as the catalytic Nucleophile.

This sequence belongs to the ArgJ family. As to quaternary structure, heterotetramer of two alpha and two beta chains.

It is found in the cytoplasm. It carries out the reaction N(2)-acetyl-L-ornithine + L-glutamate = N-acetyl-L-glutamate + L-ornithine. The enzyme catalyses L-glutamate + acetyl-CoA = N-acetyl-L-glutamate + CoA + H(+). Its pathway is amino-acid biosynthesis; L-arginine biosynthesis; L-ornithine and N-acetyl-L-glutamate from L-glutamate and N(2)-acetyl-L-ornithine (cyclic): step 1/1. It participates in amino-acid biosynthesis; L-arginine biosynthesis; N(2)-acetyl-L-ornithine from L-glutamate: step 1/4. Its function is as follows. Catalyzes two activities which are involved in the cyclic version of arginine biosynthesis: the synthesis of N-acetylglutamate from glutamate and acetyl-CoA as the acetyl donor, and of ornithine by transacetylation between N(2)-acetylornithine and glutamate. This Streptomyces avermitilis (strain ATCC 31267 / DSM 46492 / JCM 5070 / NBRC 14893 / NCIMB 12804 / NRRL 8165 / MA-4680) protein is Arginine biosynthesis bifunctional protein ArgJ.